We begin with the raw amino-acid sequence, 328 residues long: Gonadotropin-releasing hormone receptor (328 aa).

Topologically, residues 1–38 (MQDDTSSEQNPTHCSAINSSVPLVQGALPTLTLSGKIR) are extracellular. N-linked (GlcNAc...) asparagine glycosylation is present at asparagine 18. Residues 39 to 59 (VTVTFFLFLVSTTLNASFLLK) traverse the membrane as a helical segment. Residues 60-84 (LQKWTQKKEKGKKLSRMKVLLKHLT) lie on the Cytoplasmic side of the membrane. Residues 85–105 (LANLLETLIVMPLDGMWNITV) traverse the membrane as a helical segment. Over 106-115 (QWYAGELLCK) the chain is Extracellular. A disulfide bridge connects residues cysteine 114 and cysteine 196. Residues 116 to 136 (ILSYLKLFSMYAPAFMMVVIS) traverse the membrane as a helical segment. Over 137 to 160 (LDRSMAITRPLPVQSNRKLEQSMT) the chain is Cytoplasmic. Residues 161-181 (GLAWGLSSVLAGPQLYIFKMI) form a helical membrane-spanning segment. Topologically, residues 182–208 (HLENGPGQTEVFSQCVTHCSFPQWWHQ) are extracellular. A helical membrane pass occupies residues 209–229 (AFYNFFTFICLFIIPLLIMLI). The Cytoplasmic segment spans residues 230 to 271 (CNAKIIFTLTQVLQQDSNKLQLNQSKNNIPRARLRTLKMTVA). A helical transmembrane segment spans residues 272–292 (FAASFIVCWTPYYVLGLWYWF). Residues 293-306 (DPGMLHRMSEPVNH) are Extracellular-facing. A helical transmembrane segment spans residues 307–327 (FFFLFAFLNPCFDPLIYGYFS). A topological domain (cytoplasmic) is located at residue leucine 328.

This sequence belongs to the G-protein coupled receptor 1 family.

Its subcellular location is the cell membrane. In terms of biological role, receptor for gonadotropin releasing hormone (GnRH) that mediates the action of GnRH to stimulate the secretion of the gonadotropic hormones luteinizing hormone (LH) and follicle-stimulating hormone (FSH). This receptor mediates its action by association with G-proteins that activate a phosphatidylinositol-calcium second messenger system. This Cavia porcellus (Guinea pig) protein is Gonadotropin-releasing hormone receptor (GNRHR).